The chain runs to 179 residues: Large ribosomal subunit protein uL6 (179 aa).

This sequence belongs to the universal ribosomal protein uL6 family. As to quaternary structure, part of the 50S ribosomal subunit.

Functionally, this protein binds to the 23S rRNA, and is important in its secondary structure. It is located near the subunit interface in the base of the L7/L12 stalk, and near the tRNA binding site of the peptidyltransferase center. The protein is Large ribosomal subunit protein uL6 of Herpetosiphon aurantiacus (strain ATCC 23779 / DSM 785 / 114-95).